A 471-amino-acid polypeptide reads, in one-letter code: Putative F-box protein At5g36200 (471 aa).

The F-box domain maps to 1–46; it reads MAMSDLPNDLVEEIISRVPVKSIRAVSSTCKNWNTLSNDHSFTRKL.

The polypeptide is Putative F-box protein At5g36200 (Arabidopsis thaliana (Mouse-ear cress)).